A 106-amino-acid polypeptide reads, in one-letter code: Large ribosomal subunit protein bL21 (106 aa).

Belongs to the bacterial ribosomal protein bL21 family. As to quaternary structure, part of the 50S ribosomal subunit. Contacts protein L20.

This protein binds to 23S rRNA in the presence of protein L20. This Syntrophobacter fumaroxidans (strain DSM 10017 / MPOB) protein is Large ribosomal subunit protein bL21.